A 104-amino-acid chain; its full sequence is SOSS complex subunit C (104 aa).

Ala-2 carries the post-translational modification N-acetylalanine. Position 50 is a phosphoserine (Ser-50).

Belongs to the SOSS-C family. In terms of assembly, component of the SOSS complex, composed of SOSS-B (SOSS-B1/NABP2 or SOSS-B2/NABP1), SOSS-A/INTS3 and SOSS-C/INIP. SOSS complexes containing SOSS-B1/NABP2 are more abundant than complexes containing SOSS-B2/NABP1. Interacts with INTS3; the interaction is direct.

It localises to the nucleus. Component of the SOSS complex, a multiprotein complex that functions downstream of the MRN complex to promote DNA repair and G2/M checkpoint. The SOSS complex associates with single-stranded DNA at DNA lesions and influences diverse endpoints in the cellular DNA damage response including cell-cycle checkpoint activation, recombinational repair and maintenance of genomic stability. Required for efficient homologous recombination-dependent repair of double-strand breaks (DSBs) and ATM-dependent signaling pathways. This is SOSS complex subunit C (Inip) from Mus musculus (Mouse).